The primary structure comprises 480 residues: MSIKPVVALIGRPNVGKSTLFNQFTKSRQALVADLSGLTRDRQYGDATYEDKAFIVVDTGGIGEADDGRGDIDDYMSEQSYTAIHEADIIVFVVDARAGMIGADAEIGKFLHTLGKPVYVVANKVDGVHDSAPAEFYALGLGEPYPMAASHGRGVGNLLEVLTADMPSQENVVEPRGLKLAIIGRPNVGKSTLVNRLLGEDRVVVFDMPGTTRDSIYIPYTREGKDYVLIDTAGVRRRGKIDEKVEKFSVIKTLQAIEDSNVTVIVIDAHEGIVDQDLHMIGYALDAGRALVVAINKWDGLTADQKNYIKIEMDRRFNFIPYVKVHQISALHGTGVGNLYPSILRAYQSSMFEVSTNRLTQILQDAVTANPPPTVAGRRIKLRYAHIGGHNPPVIVIHGNQTGSLPKSYQRYLENQFRQVFKLEGTPLNVVFKLNENPYANKSDTPTKAKTQQLRQRERNRAQKFTTKDKPRFTNKDKKR.

EngA-type G domains follow at residues 5 to 170 (PVVA…PSQE) and 178 to 351 (LKLA…QSSM). Residues 11–18 (GRPNVGKS), 58–62 (DTGGI), 123–126 (NKVD), 184–191 (GRPNVGKS), 231–235 (DTAGV), and 296–299 (NKWD) each bind GTP. Residues 352 to 436 (FEVSTNRLTQ…PLNVVFKLNE (85 aa)) form the KH-like domain. Over residues 438–454 (PYANKSDTPTKAKTQQL) the composition is skewed to polar residues. The segment at 438 to 480 (PYANKSDTPTKAKTQQLRQRERNRAQKFTTKDKPRFTNKDKKR) is disordered. Residues 455 to 480 (RQRERNRAQKFTTKDKPRFTNKDKKR) are compositionally biased toward basic and acidic residues.

The protein belongs to the TRAFAC class TrmE-Era-EngA-EngB-Septin-like GTPase superfamily. EngA (Der) GTPase family. In terms of assembly, associates with the 50S ribosomal subunit.

GTPase that plays an essential role in the late steps of ribosome biogenesis. The polypeptide is GTPase Der (Psychrobacter cryohalolentis (strain ATCC BAA-1226 / DSM 17306 / VKM B-2378 / K5)).